We begin with the raw amino-acid sequence, 810 residues long: F-BAR domain only protein 2 (810 aa).

The F-BAR domain maps to 3-250 (MAYFVENFWG…NMANTTVESL (248 aa)). The tract at residues 3–274 (MAYFVENFWG…PGLIEFEECD (272 aa)) is mediates dimerization and binding to membranes enriched in Pi(4,5)-P2 and induces their tubulation. Residues 87-156 (HLDLVRKLQE…CVEQERLKKE (70 aa)) adopt a coiled-coil conformation. Lys297 is covalently cross-linked (Glycyl lysine isopeptide (Lys-Gly) (interchain with G-Cter in SUMO2)). The tract at residues 301–352 (DAESVECPDADSLNIPDVDEEGYSIKPETNQNDTKENHFYSSSDSDSEDEEP) is disordered. At Ser312 the chain carries Phosphoserine. Thr385 bears the Phosphothreonine mark. Phosphoserine occurs at positions 387, 394, and 403. Residues 404 to 537 (NEELTKSKPS…VSRGPSPVSL (134 aa)) form a disordered region. A compositionally biased stretch (low complexity) spans 433–456 (PSLDSSSSSSLTSSSSARPTTPLS). 7 positions are modified to phosphoserine: Ser488, Ser493, Ser496, Ser508, Ser510, Ser511, and Ser533. Positions 502-521 (PLARAESSSSISSSASLSAA) are enriched in low complexity. The segment at 521 to 810 (ANTPTVGVSR…FATGRYLADC (290 aa)) is mediates interaction with DAB2, EPS15, EPS15R and ITSN1. The region spanning 542–809 (TLPVAVALTE…RFATGRYLAD (268 aa)) is the MHD domain.

This sequence belongs to the FCHO family. Homodimer; disulfide-linked. May form homotetramer. Interacts with AP2A1. Interacts with EPS15, EPS15R, ITSN1 and ITSN2; recruit those scaffolding proteins which in turn may interact with the adaptor protein complex AP-2 at the plasma membrane. Interacts with DAB2 (via DPF motifs); mediates LDL receptor/LDLR endocytosis. Post-translationally, ubiquitinated. Mainly undergoes monoubiquitination but also polyubiquitination.

Its subcellular location is the membrane. It is found in the clathrin-coated pit. Functions in an early step of clathrin-mediated endocytosis. Has both a membrane binding/bending activity and the ability to recruit proteins essential to the formation of functional clathrin-coated pits. Has a lipid-binding activity with a preference for membranes enriched in phosphatidylserine and phosphoinositides (Pi(4,5) biphosphate) like the plasma membrane. Its membrane-bending activity might be important for the subsequent action of clathrin and adaptors in the formation of clathrin-coated vesicles. Involved in adaptor protein complex AP-2-dependent endocytosis of the transferrin receptor, it also functions in the AP-2-independent endocytosis of the LDL receptor. In Homo sapiens (Human), this protein is F-BAR domain only protein 2 (FCHO2).